We begin with the raw amino-acid sequence, 246 residues long: Flavin-dependent thymidylate synthase (246 aa).

Residues 17-241 enclose the ThyX domain; that stretch reads VTVELVKHSA…PLTYAAFNTN (225 aa). FAD contacts are provided by residues serine 69, 92–94, and glutamate 101; that span reads RHR. DUMP-binding positions include 89-92, 101-105, and arginine 173; these read EFMR and EESGR. A ThyX motif motif is present at residues 92 to 103; that stretch reads RHRVGWSYNEES. Residues 189–191 and histidine 195 each bind FAD; that span reads NAR. Position 200 (arginine 200) interacts with dUMP. The active-site Involved in ionization of N3 of dUMP, leading to its activation is the arginine 200.

The protein belongs to the thymidylate synthase ThyX family. As to quaternary structure, homotetramer. FAD serves as cofactor.

It carries out the reaction dUMP + (6R)-5,10-methylene-5,6,7,8-tetrahydrofolate + NADPH + H(+) = dTMP + (6S)-5,6,7,8-tetrahydrofolate + NADP(+). It functions in the pathway pyrimidine metabolism; dTTP biosynthesis. Its function is as follows. Catalyzes the reductive methylation of 2'-deoxyuridine-5'-monophosphate (dUMP) to 2'-deoxythymidine-5'-monophosphate (dTMP) while utilizing 5,10-methylenetetrahydrofolate (mTHF) as the methyl donor, and NADPH and FADH(2) as the reductant. In Streptomyces avermitilis (strain ATCC 31267 / DSM 46492 / JCM 5070 / NBRC 14893 / NCIMB 12804 / NRRL 8165 / MA-4680), this protein is Flavin-dependent thymidylate synthase.